Here is a 228-residue protein sequence, read N- to C-terminus: Methyltransferase verB (228 aa).

This sequence belongs to the methyltransferase superfamily.

The protein operates within secondary metabolite biosynthesis; terpenoid biosynthesis. It functions in the pathway mycotoxin biosynthesis. In terms of biological role, methyltransferase; part of the gene cluster that mediates the biosynthesis of the neurotoxin verrucosidin, a methylated alpha-pyrone polyketide that inhibits oxidative phosphorylation in mitochondria and thereby causes neurological diseases. The carbon backbone of verrucosidin is synthesized by the HR-PKS verA, and further modified by the other verrucodidin cluster enzymes. The chain is Methyltransferase verB from Penicillium polonicum.